The sequence spans 228 residues: Cytochrome c oxidase subunit 2 (228 aa).

Residues 1 to 14 lie on the Mitochondrial intermembrane side of the membrane; the sequence is MAYPLQLGLQDASS. The helical transmembrane segment at 15–45 threads the bilayer; that stretch reads PIMEELTNFHDHTLMIVFLISSLVLYLISLM. The Mitochondrial matrix segment spans residues 46–59; the sequence is LTTKLIHTSTMDAQ. Residues 60–87 traverse the membrane as a helical segment; it reads EVETIWTILPAIILILIALPSLRILYMM. Over 88–228 the chain is Mitochondrial intermembrane; sequence DEINNPVLTV…FENWSVSMTQ (141 aa). H161, C196, E198, C200, H204, and M207 together coordinate Cu cation. E198 serves as a coordination point for Mg(2+).

Belongs to the cytochrome c oxidase subunit 2 family. Component of the cytochrome c oxidase (complex IV, CIV), a multisubunit enzyme composed of 14 subunits. The complex is composed of a catalytic core of 3 subunits MT-CO1, MT-CO2 and MT-CO3, encoded in the mitochondrial DNA, and 11 supernumerary subunits COX4I, COX5A, COX5B, COX6A, COX6B, COX6C, COX7A, COX7B, COX7C, COX8 and NDUFA4, which are encoded in the nuclear genome. The complex exists as a monomer or a dimer and forms supercomplexes (SCs) in the inner mitochondrial membrane with NADH-ubiquinone oxidoreductase (complex I, CI) and ubiquinol-cytochrome c oxidoreductase (cytochrome b-c1 complex, complex III, CIII), resulting in different assemblies (supercomplex SCI(1)III(2)IV(1) and megacomplex MCI(2)III(2)IV(2)). Found in a complex with TMEM177, COA6, COX18, COX20, SCO1 and SCO2. Interacts with TMEM177 in a COX20-dependent manner. Interacts with COX20. Interacts with COX16. The cofactor is Cu cation.

The protein resides in the mitochondrion inner membrane. It carries out the reaction 4 Fe(II)-[cytochrome c] + O2 + 8 H(+)(in) = 4 Fe(III)-[cytochrome c] + 2 H2O + 4 H(+)(out). Component of the cytochrome c oxidase, the last enzyme in the mitochondrial electron transport chain which drives oxidative phosphorylation. The respiratory chain contains 3 multisubunit complexes succinate dehydrogenase (complex II, CII), ubiquinol-cytochrome c oxidoreductase (cytochrome b-c1 complex, complex III, CIII) and cytochrome c oxidase (complex IV, CIV), that cooperate to transfer electrons derived from NADH and succinate to molecular oxygen, creating an electrochemical gradient over the inner membrane that drives transmembrane transport and the ATP synthase. Cytochrome c oxidase is the component of the respiratory chain that catalyzes the reduction of oxygen to water. Electrons originating from reduced cytochrome c in the intermembrane space (IMS) are transferred via the dinuclear copper A center (CU(A)) of subunit 2 and heme A of subunit 1 to the active site in subunit 1, a binuclear center (BNC) formed by heme A3 and copper B (CU(B)). The BNC reduces molecular oxygen to 2 water molecules using 4 electrons from cytochrome c in the IMS and 4 protons from the mitochondrial matrix. This chain is Cytochrome c oxidase subunit 2 (MT-CO2), found in Meriones shawi (Shaw's jird).